Consider the following 654-residue polypeptide: Biotin-dependent 3-methylcrotonyl-coenzyme A carboxylase alpha1 subunit (654 aa).

Positions 1-448 (MFDTVLVANR…DTAVLDERSA (448 aa)) constitute a Biotin carboxylation domain. Residues 120 to 319 (KNAVAAFDVP…LVEWQLRVGA (200 aa)) form the ATP-grasp domain. Position 148–209 (148–209 (AAEVGYPVLI…ERFVLRPRHI (62 aa))) interacts with ATP. Residues glutamate 275, glutamate 290, and asparagine 292 each coordinate Mg(2+). 3 residues coordinate Mn(2+): glutamate 275, glutamate 290, and asparagine 292. Residues 578–653 (HRAVGARPAE…KVEQVLARIK (76 aa)) form the Biotinyl-binding domain. N6-biotinyllysine is present on lysine 620.

In terms of assembly, the biotin-dependent acyl-CoA carboxylase complex is composed of AccA1, which contains the biotin carboxylase (BC) and biotin carboxyl carrier protein (BCCP) domains, and AccD1, which contains the carboxyl transferase (CT) domain. The AccA1/AccD1 complex forms a dodecamer. Mg(2+) is required as a cofactor. It depends on Mn(2+) as a cofactor. Biotin serves as cofactor.

The catalysed reaction is N(6)-biotinyl-L-lysyl-[protein] + hydrogencarbonate + ATP = N(6)-carboxybiotinyl-L-lysyl-[protein] + ADP + phosphate + H(+). The protein operates within amino-acid degradation; L-leucine degradation. Component of a biotin-dependent acyl-CoA carboxylase complex. This subunit catalyzes the ATP-dependent carboxylation of the biotin carried by the biotin carboxyl carrier (BCC) domain, resulting in the formation of carboxyl biotin. When associated with the beta1 subunit AccD1, is involved in branched amino-acid catabolism with methylcrotonyl coenzyme A as the substrate. The protein is Biotin-dependent 3-methylcrotonyl-coenzyme A carboxylase alpha1 subunit (accA1) of Mycobacterium bovis (strain ATCC BAA-935 / AF2122/97).